The following is a 904-amino-acid chain: Phosphoenolpyruvate carboxylase (904 aa).

The interval 52–71 (ISRRESDAPPSTLSEQLTGR) is disordered. Over residues 60 to 70 (PPSTLSEQLTG) the composition is skewed to polar residues. Active-site residues include His151 and Lys570.

The protein belongs to the PEPCase type 1 family. It depends on Mg(2+) as a cofactor.

It catalyses the reaction oxaloacetate + phosphate = phosphoenolpyruvate + hydrogencarbonate. In terms of biological role, forms oxaloacetate, a four-carbon dicarboxylic acid source for the tricarboxylic acid cycle. This Xanthomonas euvesicatoria pv. vesicatoria (strain 85-10) (Xanthomonas campestris pv. vesicatoria) protein is Phosphoenolpyruvate carboxylase.